Reading from the N-terminus, the 241-residue chain is Eukaryotic translation initiation factor 6 (241 aa).

It belongs to the eIF-6 family. As to quaternary structure, monomer. Associates with the 60S ribosomal subunit.

The protein resides in the cytoplasm. It is found in the nucleus. It localises to the nucleolus. In terms of biological role, binds to the 60S ribosomal subunit and prevents its association with the 40S ribosomal subunit to form the 80S initiation complex in the cytoplasm. Is also involved in ribosome biogenesis. Associates with pre-60S subunits in the nucleus and is involved in its nuclear export. The sequence is that of Eukaryotic translation initiation factor 6 from Encephalitozoon cuniculi (strain GB-M1) (Microsporidian parasite).